Consider the following 359-residue polypeptide: uncharacterized protein (359 aa).

Disordered regions lie at residues 90–117 (QESP…PSRK), 132–161 (IKKE…GMTS), and 235–359 (TSME…THRR). Polar residues predominate over residues 151–161 (TPGSCSSGMTS). Residues 245–259 (KPPTVKSPPTVKLPP) are compositionally biased toward low complexity. Residues 286–299 (EENKEVPKEAEHKP) show a composition bias toward basic and acidic residues.

This is an uncharacterized protein from Homo sapiens (Human).